A 451-amino-acid polypeptide reads, in one-letter code: BAHD acyltransferase At3g29680 (451 aa).

Active-site proton acceptor residues include histidine 161 and aspartate 393.

The protein belongs to the plant acyltransferase family.

The chain is BAHD acyltransferase At3g29680 from Arabidopsis thaliana (Mouse-ear cress).